The sequence spans 320 residues: MGKDNASYLQAFILVGSSDRPGLEKILFAVILIFCILTLVGNTAIILLLVMDVRLHTPMYFFLGNLSFLDLCFTASIAPQLLWNLGGPEKTITYHGCVAQLYIYMMLGSTECVLLVVMSHDRYVAVCRSLHYMAVMRPHLCLQLVTVAWCCGFLNSFIMCPQTMQLSRCGRRRVDHFLCEMPALIAMSCEETMLVEAIHLCPGGGSPPGAALPHPHLLWRDCSRGAEDEVSSRAKESLPHLLFSPHSGLSLLRNHHLRVPEAGQQLLPRSGEVPDSLLHHRHSQHQPPHLHFEEQGCEGDHEETSGVGERGWGASTRGTL.

Asn-5 is a glycosylation site (N-linked (GlcNAc...) asparagine). 4 helical membrane-spanning segments follow: residues 30–50, 58–78, 98–118, and 140–160; these read VILI…LLLV, PMYF…ASIA, VAQL…LVVM, and LCLQ…FIMC. A disulfide bond links Cys-97 and Cys-179. Positions 267–320 are disordered; it reads LPRSGEVPDSLLHHRHSQHQPPHLHFEEQGCEGDHEETSGVGERGWGASTRGTL. Residues 290 to 304 are compositionally biased toward basic and acidic residues; the sequence is LHFEEQGCEGDHEET.

This sequence belongs to the G-protein coupled receptor 1 family.

Its subcellular location is the cell membrane. In terms of biological role, odorant receptor. In Homo sapiens (Human), this protein is Putative olfactory receptor 2W5 pseudogene.